The primary structure comprises 436 residues: MKRRASDRGAGETSARAKALGSGISGNNAKRAGPFILGPRLGNSPVPSIVQCLARKDGTDDFYQLKILTLEERGDQGIESQEERQGKMLLHTEYSLLSLLHTQDGVVHHHGLFQDRTCEVVEDAESNRMVKKMKKRICLVLDCLCAHDFSDKTADLINLQHYVIKEKRLSERETVVIFYDVVRVVEALHQKNVVHRDLKLGNMVLSKRTHRITITNFCLGKHLVSEGDLLKDQRGSPAYISPDVLSGRPYRGKPSDMWALGVVLFTMLYGQFPFYDSIPQELFRKIKAAEYTIPEDGRVSENTVCLIRKLLVLDPQQRLAAADVLEALSSIIASWQSLSSLSGPLQVVPDIDDQMSNADSSQEAKVTEECSQYEFENYMRQQLLLAEEKSSVHEARSWVPKRQSGAGVPPVRRLGHDAQPVNPLDAAILAQRYLRK.

Positions 1 to 10 (MKRRASDRGA) are enriched in basic and acidic residues. The tract at residues 1-25 (MKRRASDRGAGETSARAKALGSGIS) is disordered. Residues 35–332 (FILGPRLGNS…DVLEALSSII (298 aa)) form the Protein kinase domain. Residues 41–49 (LGNSPVPSI) and lysine 66 each bind ATP. Aspartate 197 functions as the Proton acceptor in the catalytic mechanism. The interval 396-417 (RSWVPKRQSGAGVPPVRRLGHD) is disordered.

This sequence belongs to the protein kinase superfamily. CAMK Ser/Thr protein kinase family.

Its subcellular location is the nucleus. The protein resides in the cytoplasm. It catalyses the reaction L-seryl-[protein] + ATP = O-phospho-L-seryl-[protein] + ADP + H(+). It carries out the reaction L-threonyl-[protein] + ATP = O-phospho-L-threonyl-[protein] + ADP + H(+). May be a negative regulator of NF-kappa-B and p53-mediated gene transcription. This chain is Serine/threonine-protein kinase 40 (STK40), found in Bos taurus (Bovine).